The following is a 211-amino-acid chain: Ribosomal RNA small subunit methyltransferase G (211 aa).

S-adenosyl-L-methionine is bound by residues G76, L81, V127–E128, and R142.

It belongs to the methyltransferase superfamily. RNA methyltransferase RsmG family.

It is found in the cytoplasm. It carries out the reaction guanosine(527) in 16S rRNA + S-adenosyl-L-methionine = N(7)-methylguanosine(527) in 16S rRNA + S-adenosyl-L-homocysteine. Its function is as follows. Specifically methylates the N7 position of guanine in position 527 of 16S rRNA. The chain is Ribosomal RNA small subunit methyltransferase G from Vibrio vulnificus (strain CMCP6).